Here is a 254-residue protein sequence, read N- to C-terminus: 3-dehydroquinate dehydratase (254 aa).

3-dehydroquinate is bound by residues 47–49 (EFR) and R83. The active-site Proton donor/acceptor is H144. K171 acts as the Schiff-base intermediate with substrate in catalysis. Residues R213, S232, and Q236 each coordinate 3-dehydroquinate.

The protein belongs to the type-I 3-dehydroquinase family. In terms of assembly, homodimer.

The enzyme catalyses 3-dehydroquinate = 3-dehydroshikimate + H2O. Its pathway is metabolic intermediate biosynthesis; chorismate biosynthesis; chorismate from D-erythrose 4-phosphate and phosphoenolpyruvate: step 3/7. Involved in the third step of the chorismate pathway, which leads to the biosynthesis of aromatic amino acids. Catalyzes the cis-dehydration of 3-dehydroquinate (DHQ) and introduces the first double bond of the aromatic ring to yield 3-dehydroshikimate. In Neisseria gonorrhoeae (strain ATCC 700825 / FA 1090), this protein is 3-dehydroquinate dehydratase.